We begin with the raw amino-acid sequence, 92 residues long: Small ribosomal subunit protein uS19c (92 aa).

It belongs to the universal ribosomal protein uS19 family.

The protein localises to the plastid. The protein resides in the chloroplast. Functionally, protein S19 forms a complex with S13 that binds strongly to the 16S ribosomal RNA. This Anthoceros angustus (Hornwort) protein is Small ribosomal subunit protein uS19c (rps19).